A 128-amino-acid polypeptide reads, in one-letter code: Glycine cleavage system H protein (128 aa).

A Lipoyl-binding domain is found at 24 to 106 (LVRIGISEFA…HGEGWLLIIR (83 aa)). N6-lipoyllysine is present on Lys-65.

This sequence belongs to the GcvH family. As to quaternary structure, the glycine cleavage system is composed of four proteins: P, T, L and H. It depends on (R)-lipoate as a cofactor.

Functionally, the glycine cleavage system catalyzes the degradation of glycine. The H protein shuttles the methylamine group of glycine from the P protein to the T protein. This chain is Glycine cleavage system H protein, found in Prochlorococcus marinus (strain NATL1A).